Reading from the N-terminus, the 510-residue chain is UDP-N-acetylmuramoylalanine--D-glutamate ligase (510 aa).

138–144 (GTNGKTT) is a binding site for ATP. Positions 294 to 316 (FDEPAPAPRRKKDAPPPTRAGGR) are disordered.

The protein belongs to the MurCDEF family.

The protein resides in the cytoplasm. The enzyme catalyses UDP-N-acetyl-alpha-D-muramoyl-L-alanine + D-glutamate + ATP = UDP-N-acetyl-alpha-D-muramoyl-L-alanyl-D-glutamate + ADP + phosphate + H(+). The protein operates within cell wall biogenesis; peptidoglycan biosynthesis. Functionally, cell wall formation. Catalyzes the addition of glutamate to the nucleotide precursor UDP-N-acetylmuramoyl-L-alanine (UMA). This chain is UDP-N-acetylmuramoylalanine--D-glutamate ligase, found in Bordetella pertussis (strain Tohama I / ATCC BAA-589 / NCTC 13251).